The following is a 345-amino-acid chain: UPF0324 membrane protein RB0971 (345 aa).

Transmembrane regions (helical) follow at residues 13-32 (SLSV…AAVA), 42-61 (YGAP…HFLA), 93-115 (LLIG…TILF), 130-152 (ALLT…AAVL), 161-183 (NLIF…YPIV), 193-215 (ATGI…GFSV), 228-247 (LIRV…VLRS), 262-284 (VPGF…VPVL), 291-310 (AISR…KTSL), and 320-342 (AVAL…MYYL).

The protein belongs to the UPF0324 family.

The protein resides in the cell membrane. The protein is UPF0324 membrane protein RB0971 of Rhizobium meliloti (strain 1021) (Ensifer meliloti).